Here is a 107-residue protein sequence, read N- to C-terminus: Thioredoxin (107 aa).

Residues aspartate 2 to residue 107 form the Thioredoxin domain. An intrachain disulfide couples cysteine 32 to cysteine 35.

Belongs to the thioredoxin family.

Its function is as follows. Participates in various redox reactions through the reversible oxidation of its active center dithiol to a disulfide and catalyzes dithiol-disulfide exchange reactions. This chain is Thioredoxin (trxA), found in Allochromatium vinosum (Chromatium vinosum).